The chain runs to 380 residues: E3 ubiquitin-protein ligase RNF13 (380 aa).

The first 34 residues, 1–34, serve as a signal peptide directing secretion; it reads MLLSIGMLMLSATQVYTILTVQLFAFLNLLPVEA. The Lumenal portion of the chain corresponds to 35-182; that stretch reads DILAYNFENA…VPELSLPLEY (148 aa). One can recognise a PA domain in the interval 64 to 160; the sequence is LKGFLINSKP…GESSANSLKD (97 aa). N88 is a glycosylation site (N-linked (GlcNAc...) asparagine). A helical transmembrane segment spans residues 183–203; the sequence is YLIPFLIIVGICLILIVIFMI. The Cytoplasmic segment spans residues 204-380; the sequence is TKFVQDRHRN…EPDYNIANTV (177 aa). The RING-type; atypical zinc-finger motif lies at 240 to 282; that stretch reads CAICLEEYEDGDKLRILPCSHAYHCKCVDPWLTKTKKTCPVCK. The tract at residues 285–380 is disordered; sequence VVPSQGDSDS…EPDYNIANTV (96 aa). A compositionally biased stretch (acidic residues) spans 338–356; sequence SDYEDDDNEETDSSDADNE.

In terms of assembly, interacts with ERN1. Autoubiquitinated.

The protein localises to the endoplasmic reticulum membrane. The protein resides in the late endosome membrane. It localises to the lysosome membrane. Its subcellular location is the nucleus inner membrane. It catalyses the reaction S-ubiquitinyl-[E2 ubiquitin-conjugating enzyme]-L-cysteine + [acceptor protein]-L-lysine = [E2 ubiquitin-conjugating enzyme]-L-cysteine + N(6)-ubiquitinyl-[acceptor protein]-L-lysine.. It functions in the pathway protein modification; protein ubiquitination. In terms of biological role, E3 ubiquitin-protein ligase that regulates cell proliferation. Involved in apoptosis regulation. Mediates ER stress-induced activation of JNK signaling pathway and apoptosis by promoting ERN1 activation and splicing of XBP1 mRNA. Also involved in protein trafficking and localization. This Rattus norvegicus (Rat) protein is E3 ubiquitin-protein ligase RNF13 (Rnf13).